A 622-amino-acid chain; its full sequence is Chaperone protein HscA homolog (622 aa).

It belongs to the heat shock protein 70 family.

In terms of biological role, chaperone involved in the maturation of iron-sulfur cluster-containing proteins. Has a low intrinsic ATPase activity which is markedly stimulated by HscB. In Verminephrobacter eiseniae (strain EF01-2), this protein is Chaperone protein HscA homolog.